The sequence spans 590 residues: 2-isopropylmalate synthase (590 aa).

A Pyruvate carboxyltransferase domain is found at 40 to 314; it reads PRWCAVDLRD…DPQIDFSDID (275 aa). Mg(2+) contacts are provided by D49, H253, H255, and N289. The interval 456–590 is regulatory domain; it reads APETESDAKW…SSVPAELAGV (135 aa).

Belongs to the alpha-IPM synthase/homocitrate synthase family. LeuA type 2 subfamily. In terms of assembly, homodimer. It depends on Mg(2+) as a cofactor.

The protein localises to the cytoplasm. It carries out the reaction 3-methyl-2-oxobutanoate + acetyl-CoA + H2O = (2S)-2-isopropylmalate + CoA + H(+). The protein operates within amino-acid biosynthesis; L-leucine biosynthesis; L-leucine from 3-methyl-2-oxobutanoate: step 1/4. Catalyzes the condensation of the acetyl group of acetyl-CoA with 3-methyl-2-oxobutanoate (2-ketoisovalerate) to form 3-carboxy-3-hydroxy-4-methylpentanoate (2-isopropylmalate). This Leifsonia xyli subsp. xyli (strain CTCB07) protein is 2-isopropylmalate synthase.